We begin with the raw amino-acid sequence, 490 residues long: uncharacterized protein (490 aa).

A helical membrane pass occupies residues 27–47; the sequence is VYVFLTTIILLLSLISTLIII.

It localises to the membrane. This is an uncharacterized protein from Borreliella burgdorferi (strain ATCC 35210 / DSM 4680 / CIP 102532 / B31) (Borrelia burgdorferi).